Reading from the N-terminus, the 194-residue chain is FAD-linked sulfhydryl oxidase ERV1 (194 aa).

The tract at residues 44 to 72 (LSLSLSPPPTPPSPPPPPPEVLKKDSKAA) is disordered. Residues 49 to 63 (SPPPTPPSPPPPPPE) are compositionally biased toward pro residues. The ERV/ALR sulfhydryl oxidase domain occupies 72 to 172 (APLTKEEVGR…FPCQRVNARW (101 aa)). 11 residues coordinate FAD: Lys76, Arg81, Trp84, Glu121, His125, Cys148, His151, Asn152, Asn155, Lys160, and Arg171. A disulfide bond links Cys119 and Cys122. Cys148 and Cys165 form a disulfide bridge. An intrachain disulfide couples Cys177 to Cys182. A Required for dimerization and substrate specificity motif is present at residues 177-182 (CPERSC).

In terms of assembly, homodimer. FAD is required as a cofactor. In terms of processing, contains three disulfide bonds; one catalytic disulfide (Cys-119 to Cys-122), one structural disulfide (Cys-148 to Cys-165), and one shuttle disulfide (Cys-177 to Cys-182).

It is found in the mitochondrion. It carries out the reaction 2 R'C(R)SH + O2 = R'C(R)S-S(R)CR' + H2O2. In terms of biological role, FAD-dependent sulfhydryl oxidase that catalyzes disulfide bond formation. Oxidizes thioredoxin in vitro. Required for the import and folding of small cysteine-containing proteins in the mitochondrial intermembrane space, and can act independently of the oxidoreductase MIA40. Can oxidize the cytochrome c oxidase assembly protein COX19, a typical substrate of MIA40. In Oryza sativa subsp. japonica (Rice), this protein is FAD-linked sulfhydryl oxidase ERV1.